A 556-amino-acid polypeptide reads, in one-letter code: Arginine--tRNA ligase (556 aa).

The 'HIGH' region motif lies at 117 to 127 (PNVAKQMHVGH).

This sequence belongs to the class-I aminoacyl-tRNA synthetase family. Monomer.

It localises to the cytoplasm. It carries out the reaction tRNA(Arg) + L-arginine + ATP = L-arginyl-tRNA(Arg) + AMP + diphosphate. In Cutibacterium acnes (strain DSM 16379 / KPA171202) (Propionibacterium acnes), this protein is Arginine--tRNA ligase.